The sequence spans 347 residues: MLKKSDFHYDLPEELIAQGPLPERSASRLMLVPSAPEQFQDCYVRDLPELLQPGDLLVFNDTRVIPARLFGRKVSGGRVEILIERFLGTHQAVVQLRTSRSLKVGNRILLDAGGHAGVLGRDGDFYLLSFDVESPLEQWLSDVGQLPLPPYIHREPDEYDRERYQTVFARAVGAVAAPTAGLHFDESLLARLRARGVEFGYITLHVGAGTFQPVRVALLQQHVMHSEWFKVGAELVEQVRSARARGGRVIAVGTTVVRSLESAMRHGELQPFVGETQIFIFPGYCIRSVDAMVTNFHLPESTLLMLVAAFAGRTRILDAYYHAVQQRYRFFSYGDAMLLFPRNAGEQ.

Belongs to the QueA family. As to quaternary structure, monomer.

The protein resides in the cytoplasm. The catalysed reaction is 7-aminomethyl-7-carbaguanosine(34) in tRNA + S-adenosyl-L-methionine = epoxyqueuosine(34) in tRNA + adenine + L-methionine + 2 H(+). Its pathway is tRNA modification; tRNA-queuosine biosynthesis. Transfers and isomerizes the ribose moiety from AdoMet to the 7-aminomethyl group of 7-deazaguanine (preQ1-tRNA) to give epoxyqueuosine (oQ-tRNA). This is S-adenosylmethionine:tRNA ribosyltransferase-isomerase from Xylella fastidiosa (strain 9a5c).